Reading from the N-terminus, the 419-residue chain is Innexin-2 (419 aa).

Helical transmembrane passes span 33-53 (AWFTPFVLVAMTLAISCKQYF), 108-128 (PLVLLFQAAMFVLPYHLWNLF), 184-204 (INYFLLKLGFIVNCILQMVLL), and 270-290 (LYICFYFWLIFVFVVTTAGMI).

This sequence belongs to the pannexin family.

It is found in the cell membrane. The protein localises to the cell junction. Its subcellular location is the gap junction. Functionally, structural component of the gap junctions. This Caenorhabditis elegans protein is Innexin-2 (inx-2).